The sequence spans 1553 residues: MGFRLALAWTLLVGPWMPMGARNSISWEVQRFDGWYNNLMEHKWGSKGSRLQRLVPASYADGVYQPLGEPHLPNPRDLSNTAMRGPAGQASLRNRTVLGVFFGYHVLSDLVSIEKPGCPAEFLNIHIPPGDPVFDPHKSGDVVLPFQRSRWDPNTGQSPSNPRDLTNEVTGWLDGSAIYGSSHSWSDELRSFSGGQLASGPDPAFPRQAQDPLFMWTPPDPATGQRGPQGLYAFGAEQGNREPFLQALGLLWFRYHNLCAQKLAREHPLWGDEELFQHARKRVIATYQSITMYEWLPSFLRKMPQEYTGYRPFLDPSISPEFLAASEQFFSTMVPPGVYMRNASCHFQGVINRNSSVSRALRVCNSYWSREHPNLQRAEDVDALLLGMASQIAEREDHMVVEDVQDFWPGPLKFSRTDHLASCLQRGRDLGLPSYTKARARLGLPPVTRWQDINPALSRSDGIVLEATAALYNQDLSRLELLPGGLLESYGDPGPLFSTIVLDQFVRLRDGDRYWFENTKNGLFSEKEIAEIRNTSLRDVLVAVTNMTPGALQPNVFFWHAGDPCPQPRQLSTKDLPACAPLIMRDYFKGSGFGFGVTIGTLCCFPLVSLLSAWIVAQLRRRNFKRLQVQNRQSIMCEKLVGGMKALEWQGRKEPCRPVLVHLQSGQIHVMDGRLSVLRTIQLRPPQQVNLILSSNHGRRTLLLKIPKEYDLVLMFDLEEERQVMVENLQSALKESGLSFQEWELREQELMRAAVTREQRSHLLETFFRHLFSQVLDIDQADAGALPLDSSQKVREALTCELSRAEFAESLGLKPQDMFVESMFSLADKDGNGYLSFREFLDILVVFMKGSPEEKSRLMFRMYDFDGNGLISKDEFIRMLRSFIEISNNCLSKAQLTEVVESMFREAGFQDKQELTWEDFHFMLRDHDSELRFTQLCVKGVEVPEVIKDLCRRASYISQEKLCPSPRVSAHCPRSNVDVEVELTPWKLQCPTDTDPPQEIRRRFGKKVTSFQPLLFTEAHREKFQRSRRHQTVQQFKRFVENYRRHIGCLAVFYTIAGGLFLERAYYYAFAAHHMGITDTTRVGIILSRGTAASISFMFSYILLTMCRNLITFLRETFLNRYVPFDAAVDFHRLIASTAIILTVLHSAGHVVNVYLFSISPLSVLSCLFPGLFHDNGSEFPQKYYWWFFQTVPGLTGVMLLLILAIMYVFASHHFRRCSFRGFWLTHHLYILLYMLLIIHGSFALIQLPRFHIFFLVPALIYVGDKLVSLSRKKVEISVVKAELLPSGVTHLQFQRPQGFEYKSGQWVRIACLALGTTEYHPFTLTSAPHEDTLSLHIRAAGPWTTRLREIYSPPTDDNCAKYPKLYLDGPFGEGHQEWHKFEVSVLVGGGIGVTPFASILKDLVFKSSVSCQVFCKKIYFIWVTRTQRQFEWLADIIREVEENDHRDLVSVHIYITQLAEKFDLRTTMLYICERHFQKVLNRSLFTGLRSITHFGRPPFEPFFNSLQEVHPQVRKIGVFSCGPPGMTKNVEKACQLINRQDRTHFSHHYENF.

The N-terminal stretch at 1 to 21 is a signal peptide; it reads MGFRLALAWTLLVGPWMPMGA. Residues 22-596 are Extracellular-facing; that stretch reads RNSISWEVQR…YFKGSGFGFG (575 aa). Positions 26 to 593 are peroxidase-like; mediates peroxidase activity; sequence SWEVQRFDGW…MRDYFKGSGF (568 aa). N94, N342, N354, and N534 each carry an N-linked (GlcNAc...) asparagine glycan. A helical membrane pass occupies residues 597–617; that stretch reads VTIGTLCCFPLVSLLSAWIVA. Residues 618–1046 lie on the Cytoplasmic side of the membrane; it reads QLRRRNFKRL…KRFVENYRRH (429 aa). EF-hand domains follow at residues 815-850, 851-886, and 895-930; these read PQDM…FMKG, SPEE…FIEI, and QLTE…HDSE. The Ca(2+) site is built by D828, D830, N832, Y834, E839, D864, D866, N868, and E875. Residues 956 to 1250 are interaction with TXNDC11; the sequence is YISQEKLCPS…GSFALIQLPR (295 aa). A helical transmembrane segment spans residues 1047 to 1067; sequence IGCLAVFYTIAGGLFLERAYY. Over 1068-1082 the chain is Extracellular; that stretch reads YAFAAHHMGITDTTR. Residues 1083–1103 form a helical membrane-spanning segment; the sequence is VGIILSRGTAASISFMFSYIL. The Ferric oxidoreductase domain occupies 1089 to 1271; that stretch reads RGTAASISFM…YVGDKLVSLS (183 aa). Residues 1104–1138 are Cytoplasmic-facing; sequence LTMCRNLITFLRETFLNRYVPFDAAVDFHRLIAST. A helical transmembrane segment spans residues 1139 to 1159; it reads AIILTVLHSAGHVVNVYLFSI. The Extracellular portion of the chain corresponds to 1160-1190; the sequence is SPLSVLSCLFPGLFHDNGSEFPQKYYWWFFQ. A helical transmembrane segment spans residues 1191–1211; sequence TVPGLTGVMLLLILAIMYVFA. The Cytoplasmic portion of the chain corresponds to 1212 to 1228; sequence SHHFRRCSFRGFWLTHH. A helical membrane pass occupies residues 1229–1249; sequence LYILLYMLLIIHGSFALIQLP. Position 1250 (R1250) is a topological domain, extracellular. Residues 1251–1271 form a helical membrane-spanning segment; that stretch reads FHIFFLVPALIYVGDKLVSLS. Residues 1272-1378 enclose the FAD-binding FR-type domain; the sequence is RKKVEISVVK…DGPFGEGHQE (107 aa). The Cytoplasmic portion of the chain corresponds to 1272 to 1553; the sequence is RKKVEISVVK…THFSHHYENF (282 aa).

It in the N-terminal section; belongs to the peroxidase family. In terms of assembly, interacts with TXNDC11, TPO and CYBA. In terms of processing, N-glycosylated. Specifically expressed in thyroid.

It is found in the apical cell membrane. It catalyses the reaction NADH + O2 + H(+) = H2O2 + NAD(+). The enzyme catalyses NADPH + O2 + H(+) = H2O2 + NADP(+). It participates in hormone biosynthesis; thyroid hormone biosynthesis. The NADPH oxidase activity is calcium-dependent. Peroxidase activity is inhibited by aminobenzohydrazide. Functionally, generates hydrogen peroxide which is required for the activity of thyroid peroxidase/TPO and lactoperoxidase/LPO. Plays a role in thyroid hormones synthesis and lactoperoxidase-mediated antimicrobial defense at the surface of mucosa. May have its own peroxidase activity through its N-terminal peroxidase-like domain. This Sus scrofa (Pig) protein is Dual oxidase 1 (DUOX1).